We begin with the raw amino-acid sequence, 479 residues long: Ribulose bisphosphate carboxylase large chain (479 aa).

The propeptide occupies 1 to 2; the sequence is MS. Pro-3 is subject to N-acetylproline. The residue at position 14 (Lys-14) is an N6,N6,N6-trimethyllysine. Residues Asn-123 and Thr-173 each coordinate substrate. The active-site Proton acceptor is Lys-175. Lys-177 contributes to the substrate binding site. 3 residues coordinate Mg(2+): Lys-201, Asp-203, and Glu-204. Lys-201 bears the N6-carboxylysine mark. The active-site Proton acceptor is His-294. Substrate-binding residues include Arg-295, His-327, and Ser-379.

The protein belongs to the RuBisCO large chain family. Type I subfamily. In terms of assembly, heterohexadecamer of 8 large chains and 8 small chains. Mg(2+) is required as a cofactor.

It localises to the plastid. The protein resides in the chloroplast. The catalysed reaction is 2 (2R)-3-phosphoglycerate + 2 H(+) = D-ribulose 1,5-bisphosphate + CO2 + H2O. The enzyme catalyses D-ribulose 1,5-bisphosphate + O2 = 2-phosphoglycolate + (2R)-3-phosphoglycerate + 2 H(+). RuBisCO catalyzes two reactions: the carboxylation of D-ribulose 1,5-bisphosphate, the primary event in carbon dioxide fixation, as well as the oxidative fragmentation of the pentose substrate in the photorespiration process. Both reactions occur simultaneously and in competition at the same active site. In Jasminum nudiflorum (Winter jasmine), this protein is Ribulose bisphosphate carboxylase large chain.